The sequence spans 499 residues: Hepatic triacylglycerol lipase (499 aa).

An N-terminal signal peptide occupies residues Met-1 to Thr-21. N-linked (GlcNAc...) asparagine glycosylation is present at Asn-78. Ser-168 (nucleophile) is an active-site residue. Catalysis depends on Asp-194, which acts as the Charge relay system. The essential for determining substrate specificity stretch occupies residues Cys-254–Cys-277. The active-site Charge relay system is His-279. The region spanning Tyr-352–Arg-486 is the PLAT domain. Asn-397 is a glycosylation site (N-linked (GlcNAc...) asparagine).

The protein belongs to the AB hydrolase superfamily. Lipase family. In terms of assembly, homodimer.

The protein localises to the secreted. The catalysed reaction is a triacylglycerol + H2O = a diacylglycerol + a fatty acid + H(+). The enzyme catalyses a 1-acyl-sn-glycero-3-phosphocholine + H2O = sn-glycerol 3-phosphocholine + a fatty acid + H(+). It carries out the reaction a 1,2-diacyl-sn-glycero-3-phosphocholine + H2O = a 2-acyl-sn-glycero-3-phosphocholine + a fatty acid + H(+). It catalyses the reaction 1,2,3-tri-(9Z-octadecenoyl)-glycerol + H2O = di-(9Z)-octadecenoylglycerol + (9Z)-octadecenoate + H(+). The catalysed reaction is 1,2-di-(9Z-octadecenoyl)-sn-glycero-3-phosphocholine + H2O = (9Z-octadecenoyl)-sn-glycero-3-phosphocholine + (9Z)-octadecenoate + H(+). The enzyme catalyses 1,2,3-tributanoylglycerol + H2O = dibutanoylglycerol + butanoate + H(+). It carries out the reaction 1,2-dihexadecanoyl-sn-glycero-3-phosphocholine + H2O = hexadecanoyl-sn-glycero-3-phosphocholine + hexadecanoate + H(+). It catalyses the reaction 1,2-di-(9Z-octadecenoyl)-sn-glycerol + H2O = 2-(9Z-octadecenoyl)-glycerol + (9Z)-octadecenoate + H(+). The catalysed reaction is 1,2,3-tri-(9Z-octadecenoyl)-glycerol + H2O = 2,3-di-(9Z)-octadecenoyl-sn-glycerol + (9Z)-octadecenoate + H(+). The enzyme catalyses 1-(9Z-octadecenoyl)-sn-glycero-3-phospho-L-serine + H2O = sn-glycero-3-phospho-L-serine + (9Z)-octadecenoate + H(+). It carries out the reaction 1-hexadecanoyl-sn-glycero-3-phosphocholine + H2O = sn-glycerol 3-phosphocholine + hexadecanoate + H(+). It catalyses the reaction 1,3-di-(9Z-octadecenoyl)-glycerol + H2O = 3-(9Z-octadecenoyl)-sn-glycerol + (9Z)-octadecenoate + H(+). Its function is as follows. Catalyzes the hydrolysis of triglycerides and phospholipids present in circulating plasma lipoproteins, including chylomicrons, intermediate density lipoproteins (IDL), low density lipoproteins (LDL) of large size and high density lipoproteins (HDL), releasing free fatty acids (FFA) and smaller lipoprotein particles. Also exhibits lysophospholipase activity. Can hydrolyze both neutral lipid and phospholipid substrates but shows a greater binding affinity for neutral lipid substrates than phospholipid substrates. In native LDL, preferentially hydrolyzes the phosphatidylcholine species containing polyunsaturated fatty acids at sn-2 position. This chain is Hepatic triacylglycerol lipase (LIPC), found in Oryctolagus cuniculus (Rabbit).